A 948-amino-acid polypeptide reads, in one-letter code: RNA polymerase-associated protein RapA (948 aa).

The Helicase ATP-binding domain maps to 164 to 332 (EVADRSAPRV…FARLRLLDPN (169 aa)). ATP is bound at residue 177–184 (DEVGLGKT). Positions 278–281 (DEAH) match the DEAH box motif. The 155-residue stretch at 473 to 627 (RVDWLIDTLK…TCPTGNALQH (155 aa)) folds into the Helicase C-terminal domain.

This sequence belongs to the SNF2/RAD54 helicase family. RapA subfamily. Interacts with the RNAP. Has a higher affinity for the core RNAP than for the holoenzyme. Its ATPase activity is stimulated by binding to RNAP.

Transcription regulator that activates transcription by stimulating RNA polymerase (RNAP) recycling in case of stress conditions such as supercoiled DNA or high salt concentrations. Probably acts by releasing the RNAP, when it is trapped or immobilized on tightly supercoiled DNA. Does not activate transcription on linear DNA. Probably not involved in DNA repair. In Pseudomonas putida (strain ATCC 700007 / DSM 6899 / JCM 31910 / BCRC 17059 / LMG 24140 / F1), this protein is RNA polymerase-associated protein RapA.